The sequence spans 143 residues: Small ribosomal subunit protein bS6 (143 aa).

Positions 97–143 (DTEQSLIMKSKDEKGDKHERSERRRRDDEEGDVPAATDTDGDNAEAA) are disordered. Positions 105–124 (KSKDEKGDKHERSERRRRDD) are enriched in basic and acidic residues.

It belongs to the bacterial ribosomal protein bS6 family.

Functionally, binds together with bS18 to 16S ribosomal RNA. The chain is Small ribosomal subunit protein bS6 from Xanthomonas oryzae pv. oryzae (strain MAFF 311018).